The following is a 551-amino-acid chain: Meiotically up-regulated gene 184 protein (551 aa).

Residues 12–78 (DYYAILKLQK…TKRLIYDQLF (67 aa)) enclose the J domain. The segment covering 85 to 122 (RSQYKPNSTSNPSKHTSAYASYNKGKNSKWSSPFASTT) has biased composition (polar residues). 3 disordered regions span residues 85–153 (RSQY…FPRD), 176–226 (RQEP…SVYK), and 334–359 (EAES…TRNN). Residues 124–133 (KPQESSEKYS) show a composition bias toward basic and acidic residues. The span at 134–146 (KKSSTRKKEHFNK) shows a compositional bias: basic residues. Composition is skewed to basic and acidic residues over residues 176–187 (RQEPESLKKENN) and 203–219 (GPKD…KIPE).

It localises to the cytoplasm. The protein localises to the cytoskeleton. Functionally, has a role in sporulation. This is Meiotically up-regulated gene 184 protein (mug184) from Schizosaccharomyces pombe (strain 972 / ATCC 24843) (Fission yeast).